The sequence spans 904 residues: Protein translocase subunit SecA (904 aa).

ATP is bound by residues glutamine 89, 107-111 (GEGKT), and aspartate 502. The interval 872-892 (VESDPTTWGEPSRNDPCPCGS) is disordered. Zn(2+) contacts are provided by cysteine 888, cysteine 890, cysteine 899, and histidine 900.

It belongs to the SecA family. In terms of assembly, part of the essential protein translocation apparatus which comprises SecA, SecYEG and auxiliary proteins SecDF-YajC and YidC. Homodimer. The cofactor is Zn(2+).

The protein localises to the cell inner membrane. Its subcellular location is the cytoplasm. The catalysed reaction is ATP + H2O + cellular proteinSide 1 = ADP + phosphate + cellular proteinSide 2.. Its function is as follows. Part of the Sec protein translocase complex. Interacts with the SecYEG preprotein conducting channel. Has a central role in coupling the hydrolysis of ATP to the transfer of proteins into and across the cell membrane, serving both as a receptor for the preprotein-SecB complex and as an ATP-driven molecular motor driving the stepwise translocation of polypeptide chains across the membrane. The protein is Protein translocase subunit SecA of Rhodobacter capsulatus (Rhodopseudomonas capsulata).